A 145-amino-acid polypeptide reads, in one-letter code: Putative type I specificity subunit S.MpnORF289P C-terminus (145 aa).

This sequence belongs to the type-I restriction system S methylase family. In terms of assembly, the methyltransferase is composed of M and S polypeptides.

In terms of biological role, the C-terminal section of a specificity (S) subunit of a type I methyltransferase (MTase); this subunit dictates DNA sequence specificity. The single R subunit has multiple frameshifts and is probably not expressed. This Mycoplasma pneumoniae (strain ATCC 29342 / M129 / Subtype 1) (Mycoplasmoides pneumoniae) protein is Putative type I specificity subunit S.MpnORF289P C-terminus.